Consider the following 446-residue polypeptide: NAD kinase (446 aa).

Residues Ser46, Ser48, Ser50, Ser55, and Ser64 each carry the phosphoserine modification.

Belongs to the NAD kinase family. A divalent metal cation is required as a cofactor. Widely expressed but not detected in skeletal muscle.

The catalysed reaction is NAD(+) + ATP = ADP + NADP(+) + H(+). This is NAD kinase (NADK) from Homo sapiens (Human).